We begin with the raw amino-acid sequence, 390 residues long: 3-ketoacyl-CoA thiolase (390 aa).

Cys95 acts as the Acyl-thioester intermediate in catalysis. Catalysis depends on proton acceptor residues His346 and Cys376.

This sequence belongs to the thiolase-like superfamily. Thiolase family. In terms of assembly, heterotetramer of two alpha chains (FadB) and two beta chains (FadA).

The protein localises to the cytoplasm. It catalyses the reaction an acyl-CoA + acetyl-CoA = a 3-oxoacyl-CoA + CoA. It functions in the pathway lipid metabolism; fatty acid beta-oxidation. Catalyzes the final step of fatty acid oxidation in which acetyl-CoA is released and the CoA ester of a fatty acid two carbons shorter is formed. This Psychrobacter arcticus (strain DSM 17307 / VKM B-2377 / 273-4) protein is 3-ketoacyl-CoA thiolase.